A 441-amino-acid chain; its full sequence is Xylose isomerase (441 aa).

Residues histidine 105 and aspartate 108 contribute to the active site. Mg(2+) contacts are provided by glutamate 236, glutamate 272, histidine 275, aspartate 300, aspartate 311, aspartate 313, and aspartate 343.

Belongs to the xylose isomerase family. In terms of assembly, homotetramer. Mg(2+) serves as cofactor.

The protein resides in the cytoplasm. The catalysed reaction is alpha-D-xylose = alpha-D-xylulofuranose. The chain is Xylose isomerase from Mesorhizobium japonicum (strain LMG 29417 / CECT 9101 / MAFF 303099) (Mesorhizobium loti (strain MAFF 303099)).